The sequence spans 206 residues: Ras-related protein Rab-18 (206 aa).

Positions 17, 20, 21, 22, 23, 34, 35, 40, 66, 123, 125, and 152 each coordinate GTP. Ser22 lines the Mg(2+) pocket. 2 consecutive short sequence motifs (switch) follow at residues 31 to 45 (DTFD…GVDF) and 63 to 80 (DTAG…YYRG). A Mg(2+)-binding site is contributed by Thr40. Residue Cys199 is the site of S-palmitoyl cysteine attachment. Residue Cys203 is modified to Cysteine methyl ester. A lipid anchor (S-geranylgeranyl cysteine) is attached at Cys203. A propeptide spans 204–206 (SML) (removed in mature form).

It belongs to the small GTPase superfamily. Rab family. Mg(2+) serves as cofactor.

The protein resides in the endoplasmic reticulum membrane. It is found in the golgi apparatus. Its subcellular location is the cis-Golgi network membrane. The protein localises to the lipid droplet. It localises to the apical cell membrane. It carries out the reaction GTP + H2O = GDP + phosphate + H(+). Its activity is regulated as follows. Regulated by guanine nucleotide exchange factors (GEFs) which promote the exchange of bound GDP for free GTP. Regulated by GTPase activating proteins (GAPs) which increase the GTP hydrolysis activity at the ER membrane. Inhibited by GDP dissociation inhibitors (GDIs) which prevent Rab-GDP dissociation. Its function is as follows. The small GTPases Rab are key regulators of intracellular membrane trafficking, from the formation of transport vesicles to their fusion with membranes. Rabs cycle between an inactive GDP-bound form and an active GTP-bound form that is able to recruit to membranes different sets of downstream effectors directly responsible for vesicle formation, movement, tethering and fusion. RAB18 is required for the localization of ZFYVE1 to lipid droplets and for its function in mediating the formation of endoplasmic reticulum-lipid droplets (ER-LD) contacts. Also required for maintaining endoplasmic reticulum structure. Plays a role in apical endocytosis/recycling. Plays a key role in eye and brain development and neurodegeneration. In Gallus gallus (Chicken), this protein is Ras-related protein Rab-18 (RAB18).